We begin with the raw amino-acid sequence, 142 residues long: Large ribosomal subunit protein uL23 (142 aa).

Residue K61 forms a Glycyl lysine isopeptide (Lys-Gly) (interchain with G-Cter in SUMO) linkage.

Belongs to the universal ribosomal protein uL23 family. In terms of assembly, component of the large ribosomal subunit (LSU). Mature yeast ribosomes consist of a small (40S) and a large (60S) subunit. The 40S small subunit contains 1 molecule of ribosomal RNA (18S rRNA) and 33 different proteins (encoded by 57 genes). The large 60S subunit contains 3 rRNA molecules (25S, 5.8S and 5S rRNA) and 46 different proteins (encoded by 81 genes). uL23 is associated with the polypeptide exit tunnel.

It is found in the cytoplasm. Functionally, component of the ribosome, a large ribonucleoprotein complex responsible for the synthesis of proteins in the cell. The small ribosomal subunit (SSU) binds messenger RNAs (mRNAs) and translates the encoded message by selecting cognate aminoacyl-transfer RNA (tRNA) molecules. The large subunit (LSU) contains the ribosomal catalytic site termed the peptidyl transferase center (PTC), which catalyzes the formation of peptide bonds, thereby polymerizing the amino acids delivered by tRNAs into a polypeptide chain. The nascent polypeptides leave the ribosome through a tunnel in the LSU and interact with protein factors that function in enzymatic processing, targeting, and the membrane insertion of nascent chains at the exit of the ribosomal tunnel. uL23 is a major component of the universal docking site for these factors at the polypeptide exit tunnel. The protein is Large ribosomal subunit protein uL23 of Saccharomyces cerevisiae (strain ATCC 204508 / S288c) (Baker's yeast).